Here is a 150-residue protein sequence, read N- to C-terminus: Transcription antitermination protein NusB (150 aa).

Belongs to the NusB family.

Its function is as follows. Involved in transcription antitermination. Required for transcription of ribosomal RNA (rRNA) genes. Binds specifically to the boxA antiterminator sequence of the ribosomal RNA (rrn) operons. The protein is Transcription antitermination protein NusB of Streptococcus equi subsp. zooepidemicus (strain H70).